A 729-amino-acid polypeptide reads, in one-letter code: Fatty acid oxidation complex subunit alpha (729 aa).

An enoyl-CoA hydratase/isomerase region spans residues 1–189 (MLYKGDTLYL…KIGLVDGVVK (189 aa)). A substrate-binding site is contributed by aspartate 296. The 3-hydroxyacyl-CoA dehydrogenase stretch occupies residues 311-729 (ETPKQAAVLG…ARPVGDLKTA (419 aa)). NAD(+)-binding positions include methionine 324, aspartate 343, 400–402 (VVE), lysine 407, and serine 429. Histidine 450 acts as the For 3-hydroxyacyl-CoA dehydrogenase activity in catalysis. Asparagine 453 provides a ligand contact to NAD(+). 2 residues coordinate substrate: asparagine 500 and tyrosine 660. The tract at residues 708-729 (RHNEPYYPPVEPARPVGDLKTA) is disordered.

In the N-terminal section; belongs to the enoyl-CoA hydratase/isomerase family. It in the C-terminal section; belongs to the 3-hydroxyacyl-CoA dehydrogenase family. In terms of assembly, heterotetramer of two alpha chains (FadB) and two beta chains (FadA).

It catalyses the reaction a (3S)-3-hydroxyacyl-CoA + NAD(+) = a 3-oxoacyl-CoA + NADH + H(+). It carries out the reaction a (3S)-3-hydroxyacyl-CoA = a (2E)-enoyl-CoA + H2O. The catalysed reaction is a 4-saturated-(3S)-3-hydroxyacyl-CoA = a (3E)-enoyl-CoA + H2O. The enzyme catalyses (3S)-3-hydroxybutanoyl-CoA = (3R)-3-hydroxybutanoyl-CoA. It catalyses the reaction a (3Z)-enoyl-CoA = a 4-saturated (2E)-enoyl-CoA. It carries out the reaction a (3E)-enoyl-CoA = a 4-saturated (2E)-enoyl-CoA. It functions in the pathway lipid metabolism; fatty acid beta-oxidation. Functionally, involved in the aerobic and anaerobic degradation of long-chain fatty acids via beta-oxidation cycle. Catalyzes the formation of 3-oxoacyl-CoA from enoyl-CoA via L-3-hydroxyacyl-CoA. It can also use D-3-hydroxyacyl-CoA and cis-3-enoyl-CoA as substrate. This is Fatty acid oxidation complex subunit alpha from Escherichia coli O7:K1 (strain IAI39 / ExPEC).